Consider the following 123-residue polypeptide: Photosystem II extrinsic protein U (123 aa).

The N-terminal stretch at 1–28 (MKTLARILVVFTLIVGLIGFFNPLPAQA) is a signal peptide.

It belongs to the PsbU family. PSII is composed of 1 copy each of membrane proteins PsbA, PsbB, PsbC, PsbD, PsbE, PsbF, PsbH, PsbI, PsbJ, PsbK, PsbL, PsbM, PsbT, PsbX, PsbY, PsbZ, Psb30/Ycf12, peripheral proteins PsbO, CyanoQ (PsbQ), PsbU, PsbV and a large number of cofactors. It forms dimeric complexes.

It localises to the cellular thylakoid membrane. Its function is as follows. One of the extrinsic, lumenal subunits of photosystem II (PSII). PSII is a light-driven water plastoquinone oxidoreductase, using light energy to abstract electrons from H(2)O, generating a proton gradient subsequently used for ATP formation. The extrinsic proteins stabilize the structure of photosystem II oxygen-evolving complex (OEC), the ion environment of oxygen evolution and protect the OEC against heat-induced inactivation. The polypeptide is Photosystem II extrinsic protein U (Gloeothece citriformis (strain PCC 7424) (Cyanothece sp. (strain PCC 7424))).